A 223-amino-acid polypeptide reads, in one-letter code: Dephospho-CoA kinase (223 aa).

A DPCK domain is found at 3-204; that stretch reads VFGLSGGAGS…AGRHRFRVAR (202 aa). Position 11 to 16 (11 to 16) interacts with ATP; the sequence is GSGKST.

Belongs to the CoaE family.

The protein localises to the cytoplasm. The enzyme catalyses 3'-dephospho-CoA + ATP = ADP + CoA + H(+). It participates in cofactor biosynthesis; coenzyme A biosynthesis; CoA from (R)-pantothenate: step 5/5. Functionally, catalyzes the phosphorylation of the 3'-hydroxyl group of dephosphocoenzyme A to form coenzyme A. This Anaplasma marginale (strain St. Maries) protein is Dephospho-CoA kinase.